Reading from the N-terminus, the 2108-residue chain is Mycocerosic acid synthase-like polyketide synthase (2108 aa).

Positions 1 to 23 (MGKERTKTVDRTRVTPVAVIGMG) are cleaved as a signal peptide. Cys24 carries the N-palmitoyl cysteine lipid modification. Cys24 is lipidated: S-diacylglycerol cysteine. The region spanning 24 to 436 (CRLPGGIDSP…GTNVHAIVEQ (413 aa)) is the Ketosynthase family 3 (KS3) domain. The active-site Acyl-thioester intermediate; for beta-ketoacyl synthase activity is Cys185. Residues His320 and His356 each act as for beta-ketoacyl synthase activity in the active site. The tract at residues 438–542 (PVPAPESGAP…PYPPAVGQDD (105 aa)) is linker domain (LD). The acyltransferase (AT) stretch occupies residues 543-842 (RGPVWVFSGQ…AAALAGMRRE (300 aa)). Ser634 acts as the Acyl-ester intermediate; for acyltransferase activity in catalysis. The dehydratase (DH) stretch occupies residues 900–1184 (NTVAVHPLLG…LAVRGLQLGT (285 aa)). Residues 905-1025 (HPLLGSHVRL…AVLHVVREAD (121 aa)) form an N-terminal hotdog fold region. In terms of domain architecture, PKS/mFAS DH spans 905-1191 (HPLLGSHVRL…LGTGASQASE (287 aa)). The active-site Proton acceptor; for dehydratase activity is His938. The interval 1044–1191 (PHKVDGAEVR…LGTGASQASE (148 aa)) is C-terminal hotdog fold. The active-site Proton donor; for dehydratase activity is the Asp1108. The segment at 1220-1391 (AWLLISTCDA…SGEDETAWRN (172 aa)) is pseudo beta-ketoacyl reductase (PsiKR). The interval 1419–1743 (AGMRLQIRTP…EHTGKLILDV (325 aa)) is enoylreductase (ER). The tract at residues 1765–2004 (GSYIITGGLG…HSPFAEKFQS (240 aa)) is beta-ketoacyl reductase (KR). Residues 1773-1776 (LGGL), 1796-1799 (SRSQ), 1824-1825 (DI), and 1897-1898 (FS) contribute to the NADP(+) site. Residues 2025-2101 (EEWPDRLRRL…DLMCDKLAAD (77 aa)) form the Carrier domain. Ser2060 carries the post-translational modification O-(pantetheine 4'-phosphoryl)serine.

As to quaternary structure, homodimer.

It localises to the cell membrane. It participates in lipid metabolism; fatty acid biosynthesis. Functionally, polyketide synthase likely involved in the biosynthesis of a polymethyl-branched fatty acid (PMB-FA) that might only be produced during host infection. Is required for the full virulence of M.tuberculosis during host infection. The polypeptide is Mycocerosic acid synthase-like polyketide synthase (Mycobacterium tuberculosis (strain ATCC 25618 / H37Rv)).